A 282-amino-acid polypeptide reads, in one-letter code: 4-hydroxy-3-methylbut-2-enyl diphosphate reductase (282 aa).

Cys14 is a binding site for [4Fe-4S] cluster. The (2E)-4-hydroxy-3-methylbut-2-enyl diphosphate site is built by His43 and His78. Dimethylallyl diphosphate-binding residues include His43 and His78. Isopentenyl diphosphate contacts are provided by His43 and His78. Cys100 contacts [4Fe-4S] cluster. His128 is a (2E)-4-hydroxy-3-methylbut-2-enyl diphosphate binding site. His128 lines the dimethylallyl diphosphate pocket. His128 provides a ligand contact to isopentenyl diphosphate. Glu130 serves as the catalytic Proton donor. Residue Thr164 coordinates (2E)-4-hydroxy-3-methylbut-2-enyl diphosphate. Residue Cys192 participates in [4Fe-4S] cluster binding. Positions 220, 221, 222, and 266 each coordinate (2E)-4-hydroxy-3-methylbut-2-enyl diphosphate. Residues Ser220, Ser221, Asn222, and Ser266 each contribute to the dimethylallyl diphosphate site. The isopentenyl diphosphate site is built by Ser220, Ser221, Asn222, and Ser266.

It belongs to the IspH family. [4Fe-4S] cluster is required as a cofactor.

It carries out the reaction isopentenyl diphosphate + 2 oxidized [2Fe-2S]-[ferredoxin] + H2O = (2E)-4-hydroxy-3-methylbut-2-enyl diphosphate + 2 reduced [2Fe-2S]-[ferredoxin] + 2 H(+). It catalyses the reaction dimethylallyl diphosphate + 2 oxidized [2Fe-2S]-[ferredoxin] + H2O = (2E)-4-hydroxy-3-methylbut-2-enyl diphosphate + 2 reduced [2Fe-2S]-[ferredoxin] + 2 H(+). The protein operates within isoprenoid biosynthesis; dimethylallyl diphosphate biosynthesis; dimethylallyl diphosphate from (2E)-4-hydroxy-3-methylbutenyl diphosphate: step 1/1. Its pathway is isoprenoid biosynthesis; isopentenyl diphosphate biosynthesis via DXP pathway; isopentenyl diphosphate from 1-deoxy-D-xylulose 5-phosphate: step 6/6. Catalyzes the conversion of 1-hydroxy-2-methyl-2-(E)-butenyl 4-diphosphate (HMBPP) into a mixture of isopentenyl diphosphate (IPP) and dimethylallyl diphosphate (DMAPP). Acts in the terminal step of the DOXP/MEP pathway for isoprenoid precursor biosynthesis. This chain is 4-hydroxy-3-methylbut-2-enyl diphosphate reductase, found in Clostridium perfringens (strain 13 / Type A).